Here is a 542-residue protein sequence, read N- to C-terminus: CTP synthase (542 aa).

Positions 1–265 (MPRYIFITGG…DTEILRCFGI (265 aa)) are amidoligase domain. S13 is a CTP binding site. S13 is a UTP binding site. ATP is bound at residue 14–19 (SLGKGL). Residue Y54 coordinates L-glutamine. D71 contributes to the ATP binding site. Positions 71 and 139 each coordinate Mg(2+). CTP-binding positions include 146–148 (DIE), 186–191 (KTKPTQ), and K222. Residues 186–191 (KTKPTQ) and K222 contribute to the UTP site. An ATP-binding site is contributed by 238–240 (RDA). A Glutamine amidotransferase type-1 domain is found at 298-541 (YVGLLDAYKS…IAAALHQSRM (244 aa)). Position 353 (G353) interacts with L-glutamine. C380 (nucleophile; for glutamine hydrolysis) is an active-site residue. L-glutamine contacts are provided by residues 381–384 (YGMQ), E404, and R469. Residues H514 and E516 contribute to the active site.

Belongs to the CTP synthase family. Homotetramer.

The catalysed reaction is UTP + L-glutamine + ATP + H2O = CTP + L-glutamate + ADP + phosphate + 2 H(+). It carries out the reaction L-glutamine + H2O = L-glutamate + NH4(+). It catalyses the reaction UTP + NH4(+) + ATP = CTP + ADP + phosphate + 2 H(+). It functions in the pathway pyrimidine metabolism; CTP biosynthesis via de novo pathway; CTP from UDP: step 2/2. With respect to regulation, allosterically activated by GTP, when glutamine is the substrate; GTP has no effect on the reaction when ammonia is the substrate. The allosteric effector GTP functions by stabilizing the protein conformation that binds the tetrahedral intermediate(s) formed during glutamine hydrolysis. Inhibited by the product CTP, via allosteric rather than competitive inhibition. Functionally, catalyzes the ATP-dependent amination of UTP to CTP with either L-glutamine or ammonia as the source of nitrogen. Regulates intracellular CTP levels through interactions with the four ribonucleotide triphosphates. The chain is CTP synthase from Maricaulis maris (strain MCS10) (Caulobacter maris).